The chain runs to 438 residues: tRNA-2-methylthio-N(6)-dimethylallyladenosine synthase (438 aa).

Residues Lys-3–Arg-123 form the MTTase N-terminal domain. Residues Cys-12, Cys-48, Cys-86, Cys-160, Cys-164, and Cys-167 each contribute to the [4Fe-4S] cluster site. In terms of domain architecture, Radical SAM core spans His-146–Arg-374. Positions His-377–Ala-438 constitute a TRAM domain.

This sequence belongs to the methylthiotransferase family. MiaB subfamily. Monomer. [4Fe-4S] cluster is required as a cofactor.

Its subcellular location is the cytoplasm. It carries out the reaction N(6)-dimethylallyladenosine(37) in tRNA + (sulfur carrier)-SH + AH2 + 2 S-adenosyl-L-methionine = 2-methylsulfanyl-N(6)-dimethylallyladenosine(37) in tRNA + (sulfur carrier)-H + 5'-deoxyadenosine + L-methionine + A + S-adenosyl-L-homocysteine + 2 H(+). Functionally, catalyzes the methylthiolation of N6-(dimethylallyl)adenosine (i(6)A), leading to the formation of 2-methylthio-N6-(dimethylallyl)adenosine (ms(2)i(6)A) at position 37 in tRNAs that read codons beginning with uridine. This chain is tRNA-2-methylthio-N(6)-dimethylallyladenosine synthase, found in Paramagnetospirillum magneticum (strain ATCC 700264 / AMB-1) (Magnetospirillum magneticum).